The following is a 599-amino-acid chain: Sulfite reductase [NADPH] flavoprotein alpha-component (599 aa).

A Flavodoxin-like domain is found at 64-202; the sequence is ITIISASQTG…AASEWRARVV (139 aa). FMN is bound by residues 70–75, 117–120, and 153–162; these read SQTGNA, STQG, and LGDSSYEFFC. Positions 234 to 448 constitute an FAD-binding FR-type domain; the sequence is DAPLVASLSV…IEHNDNFRLP (215 aa). Residues threonine 322, alanine 356, 386-389, 404-406, tyrosine 410, and 419-422 each bind FAD; these read RLYS, TVG, and GGAS. NADP(+)-binding positions include 519-520, 525-529, and aspartate 561; these read SR and KVYVQ. Tyrosine 599 contacts FAD.

Belongs to the NADPH-dependent sulphite reductase flavoprotein subunit CysJ family. The protein in the N-terminal section; belongs to the flavodoxin family. This sequence in the C-terminal section; belongs to the flavoprotein pyridine nucleotide cytochrome reductase family. As to quaternary structure, alpha(8)-beta(8). The alpha component is a flavoprotein, the beta component is a hemoprotein. The cofactor is FAD. It depends on FMN as a cofactor.

It catalyses the reaction hydrogen sulfide + 3 NADP(+) + 3 H2O = sulfite + 3 NADPH + 4 H(+). The protein operates within sulfur metabolism; hydrogen sulfide biosynthesis; hydrogen sulfide from sulfite (NADPH route): step 1/1. Its function is as follows. Component of the sulfite reductase complex that catalyzes the 6-electron reduction of sulfite to sulfide. This is one of several activities required for the biosynthesis of L-cysteine from sulfate. The flavoprotein component catalyzes the electron flow from NADPH -&gt; FAD -&gt; FMN to the hemoprotein component. The polypeptide is Sulfite reductase [NADPH] flavoprotein alpha-component (Shigella dysenteriae serotype 1 (strain Sd197)).